A 354-amino-acid polypeptide reads, in one-letter code: Selenide, water dikinase (354 aa).

The active site involves cysteine 23. ATP-binding positions include lysine 26 and 54–56 (TAD). Aspartate 57 contacts Mg(2+). Residues aspartate 74, aspartate 97, and 145–147 (GHS) contribute to the ATP site. Aspartate 97 provides a ligand contact to Mg(2+). Position 233 (aspartate 233) interacts with Mg(2+).

This sequence belongs to the selenophosphate synthase 1 family. Class I subfamily. As to quaternary structure, homodimer. Mg(2+) is required as a cofactor.

The catalysed reaction is hydrogenselenide + ATP + H2O = selenophosphate + AMP + phosphate + 2 H(+). Synthesizes selenophosphate from selenide and ATP. This is Selenide, water dikinase from Paraburkholderia xenovorans (strain LB400).